The chain runs to 370 residues: Spermidine/putrescine import ATP-binding protein PotA (370 aa).

In terms of domain architecture, ABC transporter spans 11-241; sequence IELRSITKSY…PKNLFVAKFI (231 aa). Residue 43-50 participates in ATP binding; the sequence is GPSGCGKT.

The protein belongs to the ABC transporter superfamily. Spermidine/putrescine importer (TC 3.A.1.11.1) family. The complex is composed of two ATP-binding proteins (PotA), two transmembrane proteins (PotB and PotC) and a solute-binding protein (PotD).

Its subcellular location is the cell inner membrane. The enzyme catalyses ATP + H2O + polyamine-[polyamine-binding protein]Side 1 = ADP + phosphate + polyamineSide 2 + [polyamine-binding protein]Side 1.. In terms of biological role, part of the ABC transporter complex PotABCD involved in spermidine/putrescine import. Responsible for energy coupling to the transport system. The protein is Spermidine/putrescine import ATP-binding protein PotA of Pasteurella multocida (strain Pm70).